Reading from the N-terminus, the 57-residue chain is Large ribosomal subunit protein eL20 (57 aa).

A compositionally biased stretch (polar residues) spans 1–10 (MSEFTVTGTF). The tract at residues 1–21 (MSEFTVTGTFESRDGNQPFEK) is disordered.

It belongs to the eukaryotic ribosomal protein eL20 family. Part of the 50S ribosomal subunit. Binds 23S rRNA.

This Halomicrobium mukohataei (strain ATCC 700874 / DSM 12286 / JCM 9738 / NCIMB 13541) (Haloarcula mukohataei) protein is Large ribosomal subunit protein eL20.